We begin with the raw amino-acid sequence, 251 residues long: Triosephosphate isomerase (251 aa).

9 to 11 (NWK) lines the substrate pocket. Residue H95 is the Electrophile of the active site. E167 (proton acceptor) is an active-site residue. Residues G173, S213, and 234 to 235 (GG) each bind substrate.

The protein belongs to the triosephosphate isomerase family. As to quaternary structure, homodimer.

It is found in the cytoplasm. The catalysed reaction is D-glyceraldehyde 3-phosphate = dihydroxyacetone phosphate. Its pathway is carbohydrate biosynthesis; gluconeogenesis. It participates in carbohydrate degradation; glycolysis; D-glyceraldehyde 3-phosphate from glycerone phosphate: step 1/1. In terms of biological role, involved in the gluconeogenesis. Catalyzes stereospecifically the conversion of dihydroxyacetone phosphate (DHAP) to D-glyceraldehyde-3-phosphate (G3P). The protein is Triosephosphate isomerase of Ligilactobacillus salivarius (strain UCC118) (Lactobacillus salivarius).